The following is an 81-amino-acid chain: Salivary thrombin inhibitor anophelin (81 aa).

The signal sequence occupies residues 1–22 (MANKLFLISLLCVVLVAKIAQA). Asparagine 45 carries N-linked (GlcNAc...) asparagine glycosylation. The segment at 70–73 (DPGR) is blocks active site cleft of host thrombin in a reverse direction compared to substrates.

Belongs to the anophelin family. As to quaternary structure, interacts with human F2 (thrombin); the interaction results in thrombin inhibition.

Its subcellular location is the secreted. Functionally, salivary protein with anticoagulant activity that inhibits host thrombin (F2). This Anopheles darlingi (Mosquito) protein is Salivary thrombin inhibitor anophelin.